Consider the following 117-residue polypeptide: Large ribosomal subunit protein bL20c (117 aa).

This sequence belongs to the bacterial ribosomal protein bL20 family.

It is found in the plastid. It localises to the chloroplast. Binds directly to 23S ribosomal RNA and is necessary for the in vitro assembly process of the 50S ribosomal subunit. It is not involved in the protein synthesizing functions of that subunit. The protein is Large ribosomal subunit protein bL20c of Olimarabidopsis pumila (Dwarf rocket).